A 238-amino-acid chain; its full sequence is Uridylate kinase (238 aa).

An ATP-binding site is contributed by 12–15 (KLSG). A UMP-binding site is contributed by Gly-54. The ATP site is built by Gly-55 and Arg-59. Residues Asp-74 and 135 to 142 (TGNPFFTT) each bind UMP. Residues Thr-162, Tyr-168, and Asp-171 each coordinate ATP.

Belongs to the UMP kinase family. As to quaternary structure, homohexamer.

The protein resides in the cytoplasm. The enzyme catalyses UMP + ATP = UDP + ADP. Its pathway is pyrimidine metabolism; CTP biosynthesis via de novo pathway; UDP from UMP (UMPK route): step 1/1. With respect to regulation, inhibited by UTP. Its function is as follows. Catalyzes the reversible phosphorylation of UMP to UDP. This chain is Uridylate kinase, found in Janthinobacterium sp. (strain Marseille) (Minibacterium massiliensis).